We begin with the raw amino-acid sequence, 987 residues long: AP3-complex subunit beta-A (987 aa).

The disordered stretch occupies residues 586 to 662; it reads QDQLSDLDKQ…ISETSVSADQ (77 aa). A compositionally biased stretch (acidic residues) spans 603–613; it reads DGSEESSETGD. Positions 614–631 are enriched in low complexity; it reads ENGSSDYDSESSNGSDFS.

Belongs to the adaptor complexes large subunit family. As to quaternary structure, adaptor protein complex 3 (AP-3) is a heterotetramer composed of two large adaptins (delta-type subunit and beta-type subunit), a medium adaptin (mu-type subunit) and a small adaptin (sigma-type subunit).

It is found in the cytoplasm. The protein localises to the golgi apparatus. It localises to the cytoplasmic vesicle membrane. In terms of biological role, part of the AP-3 complex, an adaptor-related complex which seems to be clathrin-associated. The complex is associated with the Golgi region as well as more peripheral structures. It facilitates the budding of vesicles from the Golgi membrane and may be directly involved in trafficking to the vacuole. It also function in maintaining the identity of lytic vacuoles and in regulating the transition between storage and lytic vacuoles. This Arabidopsis thaliana (Mouse-ear cress) protein is AP3-complex subunit beta-A (AP3BA).